Here is a 505-residue protein sequence, read N- to C-terminus: Protein MGF 505-4R (505 aa).

The protein belongs to the asfivirus MGF 505 family.

Functionally, plays a role in virus cell tropism, and may be required for efficient virus replication in macrophages. The protein is Protein MGF 505-4R of Ornithodoros (relapsing fever ticks).